The following is a 156-amino-acid chain: UPF0225 protein PFLU_1319 (156 aa).

Belongs to the UPF0225 family.

In Pseudomonas fluorescens (strain SBW25), this protein is UPF0225 protein PFLU_1319.